Consider the following 181-residue polypeptide: Peptidyl-prolyl cis-trans isomerase H (181 aa).

A PPIase cyclophilin-type domain is found at 17-180 (FFDITLGGES…QDVTIIQCGE (164 aa)).

This sequence belongs to the cyclophilin-type PPIase family. PPIase H subfamily.

Its subcellular location is the nucleus. It carries out the reaction [protein]-peptidylproline (omega=180) = [protein]-peptidylproline (omega=0). In terms of biological role, PPIases accelerate the folding of proteins. It catalyzes the cis-trans isomerization of proline imidic peptide bonds in oligopeptides. The sequence is that of Peptidyl-prolyl cis-trans isomerase H (cyp3) from Aspergillus oryzae (strain ATCC 42149 / RIB 40) (Yellow koji mold).